The chain runs to 153 residues: UPF0260 protein Plav_0898 (153 aa).

It belongs to the UPF0260 family.

The chain is UPF0260 protein Plav_0898 from Parvibaculum lavamentivorans (strain DS-1 / DSM 13023 / NCIMB 13966).